The primary structure comprises 74 residues: DNA-directed RNA polymerase subunit omega (74 aa).

The protein belongs to the RNA polymerase subunit omega family. In terms of assembly, the RNAP catalytic core consists of 2 alpha, 1 beta, 1 beta' and 1 omega subunit. When a sigma factor is associated with the core the holoenzyme is formed, which can initiate transcription.

It catalyses the reaction RNA(n) + a ribonucleoside 5'-triphosphate = RNA(n+1) + diphosphate. Promotes RNA polymerase assembly. Latches the N- and C-terminal regions of the beta' subunit thereby facilitating its interaction with the beta and alpha subunits. This chain is DNA-directed RNA polymerase subunit omega, found in Helicobacter acinonychis (strain Sheeba).